We begin with the raw amino-acid sequence, 203 residues long: A-type ATP synthase subunit E (203 aa).

This sequence belongs to the V-ATPase E subunit family. As to quaternary structure, has multiple subunits with at least A(3), B(3), C, D, E, F, H, I and proteolipid K(x).

Its subcellular location is the cell membrane. Component of the A-type ATP synthase that produces ATP from ADP in the presence of a proton gradient across the membrane. In Methanococcus aeolicus (strain ATCC BAA-1280 / DSM 17508 / OCM 812 / Nankai-3), this protein is A-type ATP synthase subunit E.